Reading from the N-terminus, the 353-residue chain is Heterogeneous nuclear ribonucleoproteins A2/B1 (353 aa).

Position 1 is an N-acetylmethionine (M1). T4 carries the post-translational modification Phosphothreonine. Residues P9–R15 carry the Nuclear localization signal motif. RRM domains are found at residues R21 to K104 and K112 to Q191. K22 participates in a covalent cross-link: Glycyl lysine isopeptide (Lys-Gly) (interchain with G-Cter in SUMO2). A Phosphoserine modification is found at S29. R38 carries the omega-N-methylarginine modification. The residue at position 85 (S85) is a Phosphoserine. The residue at position 104 (K104) is an N6,N6-dimethyllysine; alternate. Residue K104 forms a Glycyl lysine isopeptide (Lys-Gly) (interchain with G-Cter in SUMO2); alternate linkage. Residues K112, K120, and K137 each participate in a glycyl lysine isopeptide (Lys-Gly) (interchain with G-Cter in SUMO2) cross-link. T140 is subject to Phosphothreonine. S149 is modified (phosphoserine). Residue K152 forms a Glycyl lysine isopeptide (Lys-Gly) (interchain with G-Cter in SUMO2) linkage. T159 is subject to Phosphothreonine. Residues K168 and K173 each participate in a glycyl lysine isopeptide (Lys-Gly) (interchain with G-Cter in SUMO2); alternate cross-link. N6-acetyllysine; alternate is present on residues K168 and K173. T176 is modified (phosphothreonine). Residue K186 forms a Glycyl lysine isopeptide (Lys-Gly) (interchain with G-Cter in SUMO2) linkage. S189 and S201 each carry phosphoserine. The disordered stretch occupies residues M193 to Y353. The segment covering G202 to P223 has biased composition (gly residues). At R203 the chain carries Asymmetric dimethylarginine; alternate. A Dimethylated arginine; alternate modification is found at R203. R203 is modified (omega-N-methylarginine; alternate). S212 bears the Phosphoserine mark. R213 carries the post-translational modification Asymmetric dimethylarginine; alternate. R213 carries the post-translational modification Dimethylated arginine; alternate. At R213 the chain carries Omega-N-methylarginine; alternate. S225 is modified (phosphoserine). The residue at position 228 (R228) is an Omega-N-methylarginine. Residues S231 and S236 each carry the phosphoserine modification. Residue R238 is modified to Omega-N-methylarginine. S259 is modified (phosphoserine). R266 carries the post-translational modification Asymmetric dimethylarginine; alternate. Residue R266 is modified to Omega-N-methylarginine; alternate. A nuclear targeting sequence region spans residues Q308 to Y347. The span at N320 to Y353 shows a compositional bias: gly residues. S324 carries the post-translational modification Phosphoserine. R325 bears the Omega-N-methylarginine mark. Y331 is subject to Phosphotyrosine. Residues S341 and S344 each carry the phosphoserine modification. At Y347 the chain carries Phosphotyrosine. An Omega-N-methylarginine modification is found at R350.

In terms of assembly, identified in the spliceosome C complex. Identified in a IGF2BP1-dependent mRNP granule complex containing untranslated mRNAs. Interacts with IGF2BP1. Interacts with C9orf72. Interacts with DGCR8. Interacts with TARDBP. Interacts with CKAP5. Interacts with PPIA/CYPA. Interacts (via C-terminus) with FAM76B; the interaction results in retention of HNRNPA2B1 in the nucleus and inhibition of the NF-kappa-B-mediated inflammatory pathway. Interacts with NF-kappa-B inhibitors NFKBIA and NFKBIE; the interaction may be mediated by the RRM2 domain of HNRNPA2B1, and HNRNPA2B1 may interact simultaneously with FAM76B and either NFKBIA or NFKBIE to form a complex. Post-translationally, sumoylated in exosomes, promoting miRNAs-binding. Asymmetric dimethylation at Arg-266 constitutes the major methylation site. According to a report, methylation affects subcellular location and promotes nuclear localization. According to another report, methylation at Arg-266 does not influence nucleocytoplasmic shuttling.

The protein resides in the nucleus. The protein localises to the nucleoplasm. It is found in the cytoplasmic granule. It localises to the secreted. Its subcellular location is the extracellular exosome. Its function is as follows. Heterogeneous nuclear ribonucleoprotein (hnRNP) that associates with nascent pre-mRNAs, packaging them into hnRNP particles. The hnRNP particle arrangement on nascent hnRNA is non-random and sequence-dependent and serves to condense and stabilize the transcripts and minimize tangling and knotting. Packaging plays a role in various processes such as transcription, pre-mRNA processing, RNA nuclear export, subcellular location, mRNA translation and stability of mature mRNAs. Forms hnRNP particles with at least 20 other different hnRNP and heterogeneous nuclear RNA in the nucleus. Involved in transport of specific mRNAs to the cytoplasm in oligodendrocytes and neurons: acts by specifically recognizing and binding the A2RE (21 nucleotide hnRNP A2 response element) or the A2RE11 (derivative 11 nucleotide oligonucleotide) sequence motifs present on some mRNAs, and promotes their transport to the cytoplasm. Specifically binds single-stranded telomeric DNA sequences, protecting telomeric DNA repeat against endonuclease digestion. Also binds other RNA molecules, such as primary miRNA (pri-miRNAs): acts as a nuclear 'reader' of the N6-methyladenosine (m6A) mark by specifically recognizing and binding a subset of nuclear m6A-containing pri-miRNAs. Binding to m6A-containing pri-miRNAs promotes pri-miRNA processing by enhancing binding of DGCR8 to pri-miRNA transcripts. Involved in miRNA sorting into exosomes following sumoylation, possibly by binding (m6A)-containing pre-miRNAs. Acts as a regulator of efficiency of mRNA splicing, possibly by binding to m6A-containing pre-mRNAs. Plays a role in the splicing of pyruvate kinase PKM by binding repressively to sequences flanking PKM exon 9, inhibiting exon 9 inclusion and resulting in exon 10 inclusion and production of the PKM M2 isoform. The protein is Heterogeneous nuclear ribonucleoproteins A2/B1 (HNRNPA2B1) of Pongo abelii (Sumatran orangutan).